Reading from the N-terminus, the 574-residue chain is Sodium/hydrogen exchanger 8 (574 aa).

11 helical membrane passes run 53–73 (MTIFFSLLVLAICIILVHLLI), 77–97 (LHFLPESVAVVSLGIIMGAFI), 116–136 (PNMFFLLLLPPIIFESGYSLH), 149–169 (LFSVFGTAISAFIVGGGIYFL), 184–204 (FAFGSLISAVDPVATIAIFNA), 254–274 (LGYFLKMFFGSAALGTLTGLI), 304–324 (GLAEGISLSGIMAILFSGIVM), 347–367 (VAFMCETCVFAFLGLSIFSFP), 373–393 (SFVIWCIVLVLFGRAVNIFPL), 410–430 (MFIMWFSGLRGAIPYALSLHL), and 444–464 (TTIIIVLFTVLLLGGGTMPLI).

This sequence belongs to the monovalent cation:proton antiporter 1 (CPA1) transporter (TC 2.A.36) family.

It localises to the golgi apparatus membrane. In terms of biological role, involved in pH regulation to eliminate acids generated by active metabolism or to counter adverse environmental conditions. Major proton extruding system driven by the inward sodium ion chemical gradient. Plays an important role in signal transduction. This Gallus gallus (Chicken) protein is Sodium/hydrogen exchanger 8.